A 185-amino-acid chain; its full sequence is MIILASHSPRRQELLKRIVPDFESHPASINERALPVLDPPAYVQSLATAKGQSLVPSYPGATIIAADTMVAFQGKLLGKPHDRAEAKQMITALGGQTHQVYTGLWVRLDNGSVRQQVVTTDVTFWPLSEADVESYLAEDAYQDKAGAYGIQDAGALLVKSIHGDFYNVMGLPISTLYRMLLAEPQ.

The Proton acceptor role is filled by Asp67.

This sequence belongs to the Maf family. YhdE subfamily. A divalent metal cation is required as a cofactor.

The protein resides in the cytoplasm. The enzyme catalyses dTTP + H2O = dTMP + diphosphate + H(+). It carries out the reaction UTP + H2O = UMP + diphosphate + H(+). Its function is as follows. Nucleoside triphosphate pyrophosphatase that hydrolyzes dTTP and UTP. May have a dual role in cell division arrest and in preventing the incorporation of modified nucleotides into cellular nucleic acids. In Lacticaseibacillus casei (strain BL23) (Lactobacillus casei), this protein is dTTP/UTP pyrophosphatase.